The primary structure comprises 350 residues: Cytochrome c biogenesis protein CcsA (350 aa).

Helical transmembrane passes span 23 to 43, 47 to 67, 82 to 102, 108 to 128, 153 to 173, 258 to 278, 293 to 313, and 319 to 339; these read NVAF…AAFP, LLAE…AALL, LYES…LALH, WVGV…ALVL, VMLL…SFLI, LIGL…VWAN, WALI…TKGW, and ALLA…VNFL.

It belongs to the CcmF/CycK/Ccl1/NrfE/CcsA family. In terms of assembly, may interact with ccs1.

The protein localises to the cellular thylakoid membrane. In terms of biological role, required during biogenesis of c-type cytochromes (cytochrome c6 and cytochrome f) at the step of heme attachment. This Synechococcus sp. (strain JA-2-3B'a(2-13)) (Cyanobacteria bacterium Yellowstone B-Prime) protein is Cytochrome c biogenesis protein CcsA.